The sequence spans 840 residues: Heat shock 70 kDa protein 4 (840 aa).

Lysine 53 is subject to N6-acetyllysine. Phosphoserine is present on serine 76. Tyrosine 89 and tyrosine 336 each carry phosphotyrosine. 2 positions are modified to phosphoserine: serine 393 and serine 415. At lysine 430 the chain carries N6-acetyllysine. Residues 500–575 (VHKSEENEEP…QAKKAKVKTS (76 aa)) are disordered. Over residues 514–533 (QNAKEEEKMQVDQEEPHVEE) the composition is skewed to basic and acidic residues. Threonine 538 carries the post-translational modification Phosphothreonine. 2 positions are modified to phosphoserine: serine 546 and serine 647. Tyrosine 660 is modified (phosphotyrosine). Residue lysine 679 is modified to N6-acetyllysine. Serine 756 carries the post-translational modification Phosphoserine. The residue at position 773 (lysine 773) is an N6-methyllysine. A disordered region spans residues 783–840 (ISKPKPKVEPPKEEQKNAEQNGPVDGQGDNPGPQAAEQGTDAAVPSDSDKKLPEMDID). Composition is skewed to basic and acidic residues over residues 788–799 (PKVEPPKEEQKN) and 829–840 (DSDKKLPEMDID).

The protein belongs to the heat shock protein 70 family. In terms of assembly, interacts with TJP1/ZO-1.

The protein localises to the cytoplasm. The protein is Heat shock 70 kDa protein 4 (HSPA4) of Pongo abelii (Sumatran orangutan).